The primary structure comprises 413 residues: Arginine biosynthesis bifunctional protein ArgJ (413 aa).

Residues T160, K186, T197, E284, N408, and S413 each coordinate substrate. The active-site Nucleophile is the T197.

This sequence belongs to the ArgJ family. As to quaternary structure, heterotetramer of two alpha and two beta chains.

It is found in the cytoplasm. It carries out the reaction N(2)-acetyl-L-ornithine + L-glutamate = N-acetyl-L-glutamate + L-ornithine. The catalysed reaction is L-glutamate + acetyl-CoA = N-acetyl-L-glutamate + CoA + H(+). It participates in amino-acid biosynthesis; L-arginine biosynthesis; L-ornithine and N-acetyl-L-glutamate from L-glutamate and N(2)-acetyl-L-ornithine (cyclic): step 1/1. It functions in the pathway amino-acid biosynthesis; L-arginine biosynthesis; N(2)-acetyl-L-ornithine from L-glutamate: step 1/4. Functionally, catalyzes two activities which are involved in the cyclic version of arginine biosynthesis: the synthesis of N-acetylglutamate from glutamate and acetyl-CoA as the acetyl donor, and of ornithine by transacetylation between N(2)-acetylornithine and glutamate. The protein is Arginine biosynthesis bifunctional protein ArgJ of Burkholderia pseudomallei (strain 1710b).